The following is a 70-amino-acid chain: Putative membrane protein insertion efficiency factor (70 aa).

The protein belongs to the UPF0161 family.

The protein resides in the cell inner membrane. In terms of biological role, could be involved in insertion of integral membrane proteins into the membrane. This Francisella tularensis subsp. tularensis (strain SCHU S4 / Schu 4) protein is Putative membrane protein insertion efficiency factor.